Consider the following 466-residue polypeptide: 3-isopropylmalate dehydratase large subunit (466 aa).

The [4Fe-4S] cluster site is built by C349, C410, and C413.

This sequence belongs to the aconitase/IPM isomerase family. LeuC type 1 subfamily. As to quaternary structure, heterodimer of LeuC and LeuD. The cofactor is [4Fe-4S] cluster.

It carries out the reaction (2R,3S)-3-isopropylmalate = (2S)-2-isopropylmalate. The protein operates within amino-acid biosynthesis; L-leucine biosynthesis; L-leucine from 3-methyl-2-oxobutanoate: step 2/4. Functionally, catalyzes the isomerization between 2-isopropylmalate and 3-isopropylmalate, via the formation of 2-isopropylmaleate. The chain is 3-isopropylmalate dehydratase large subunit from Vesicomyosocius okutanii subsp. Calyptogena okutanii (strain HA).